Consider the following 368-residue polypeptide: Putative zinc metalloprotease Cj1068 (368 aa).

Histidine 36 contacts Zn(2+). Glutamate 37 is a catalytic residue. Residue histidine 40 participates in Zn(2+) binding. Helical transmembrane passes span 112–134 (IYIL…IIIG), 291–313 (FTLL…LLPI), and 338–360 (TFEY…ATYN). The PDZ domain maps to 126-197 (AFFLYIIIGN…LKILINREGK (72 aa)).

This sequence belongs to the peptidase M50B family. Zn(2+) serves as cofactor.

It is found in the cell inner membrane. This chain is Putative zinc metalloprotease Cj1068, found in Campylobacter jejuni subsp. jejuni serotype O:2 (strain ATCC 700819 / NCTC 11168).